Here is a 170-residue protein sequence, read N- to C-terminus: Adenine phosphoribosyltransferase (170 aa).

The protein belongs to the purine/pyrimidine phosphoribosyltransferase family. Homodimer.

It is found in the cytoplasm. The catalysed reaction is AMP + diphosphate = 5-phospho-alpha-D-ribose 1-diphosphate + adenine. Its pathway is purine metabolism; AMP biosynthesis via salvage pathway; AMP from adenine: step 1/1. Catalyzes a salvage reaction resulting in the formation of AMP, that is energically less costly than de novo synthesis. The polypeptide is Adenine phosphoribosyltransferase (Bacillus anthracis (strain A0248)).